A 417-amino-acid polypeptide reads, in one-letter code: Mast cell carboxypeptidase A (417 aa).

The N-terminal stretch at 1–15 (MRLILPVGLIATTLA) is a signal peptide. The propeptide at 16–109 (IAPVRFDREK…IEKQFDVKED (94 aa)) is activation peptide. The Peptidase M14 domain maps to 118–412 (KYNNWEKIVA…LAVKFIAKYI (295 aa)). 2 disulfide bridges follow: cysteine 173–cysteine 186 and cysteine 245–cysteine 268. 2 residues coordinate Zn(2+): histidine 176 and glutamate 179. Histidine 304 is a Zn(2+) binding site. The Proton donor/acceptor role is filled by glutamate 378.

The protein belongs to the peptidase M14 family. It depends on Zn(2+) as a cofactor.

The protein localises to the cytoplasmic vesicle. It localises to the secretory vesicle. The enzyme catalyses Release of a C-terminal amino acid, but little or no action with -Asp, -Glu, -Arg, -Lys or -Pro.. This is Mast cell carboxypeptidase A (CPA3) from Homo sapiens (Human).